The sequence spans 669 residues: p135Gag-Myb-Ets-transforming protein (669 aa).

Basic and acidic residues predominate over residues 1–10; sequence NSTMRRKVEQ. Disordered regions lie at residues 1-27 and 132-153; these read NSTM…SATT and TQNH…NTMT. Residues 90–142 are transcriptional activation domain; the sequence is PAAAAIQRHYNDEDPEKEKRIKELELLLMSTENELKGQQALPTQNHTANYPGW. The 86-residue stretch at 276 to 361 folds into the PNT domain; the sequence is ATFSGFAKEQ…EHLEILQKEE (86 aa). The ETS DNA-binding region spans 556–640; that stretch reads GSGPIQLWQF…AGKRYVYRFV (85 aa).

It localises to the host nucleus. Functionally, DNA-binding protein that specifically recognizes the sequence 5'-YAAC[GT]G-3'. The Myb-Ets protein induces predominantly erythroblastosis in chicken and transforms avian erythroblasts and immature myelomonocytic cells in culture. It appears that the Ets domain is responsible for the effects on erythroid cells and that the Myb domain encodes the myeloid-transforming capacity. The sequence is that of p135Gag-Myb-Ets-transforming protein (GAG) from Avian leukemia virus E26.